The following is a 391-amino-acid chain: 3-ketoacyl-CoA thiolase (391 aa).

The active-site Acyl-thioester intermediate is cysteine 95. Residues histidine 347 and cysteine 377 each act as proton acceptor in the active site.

Belongs to the thiolase-like superfamily. Thiolase family. As to quaternary structure, heterotetramer of two alpha chains (FadB) and two beta chains (FadA).

It localises to the cytoplasm. It carries out the reaction an acyl-CoA + acetyl-CoA = a 3-oxoacyl-CoA + CoA. The protein operates within lipid metabolism; fatty acid beta-oxidation. Functionally, catalyzes the final step of fatty acid oxidation in which acetyl-CoA is released and the CoA ester of a fatty acid two carbons shorter is formed. This chain is 3-ketoacyl-CoA thiolase, found in Pseudomonas putida (strain ATCC 47054 / DSM 6125 / CFBP 8728 / NCIMB 11950 / KT2440).